A 1076-amino-acid polypeptide reads, in one-letter code: MPKRTDIQSILILGAGPIVIGQACEFDYSGAQACKALREEGYRVILVNSNPATIMTDPEMADATYIEPIHWEVVRKIIEKERPDAILPTMGGQTALNCALALEKHGVLAEFGVEMIGATADAIDKAEDRSRFDKAMKSIGLECPRADTAKSMEEAYKVLDMVGFPCIIRPSFTMGGSGGGIAYNREEFEEICTRGLDLSPTNELLIDESLIGWKEYEMEVVRDKNDNCIIVCAIENFDPMGIHTGDSITVAPAQTLTDKEYQIMRNASLAVLREIGVETGGSNVQFGINPKDGRMVIIEMNPRVSRSSALASKATGFPIAKVAAKLAVGFTLDELMNDITGGATPASFEPTIDYVVTKIPRFNFEKFAGANDRLTTQMKSVGEVMAIGRNQQESLQKALRGLEVGAAGLDEKVDLDAPDALTKIRYELKEAGAERIWYIADAFRAGMSVDGVFNLTNIDRWFLVQIEELVKLEAEVKAGGFAGLNQDVLRKMKRKGFSDARLSKLLGVSENEIRRLRDQYNIHPVYKRVDTCAAEFKSDTAYMYSTYDEECEANPTDKDKIMVLGGGPNRIGQGIEFDYCCVHAALALREDGYETIMVNCNPETVSTDYDTSDRLYFEPVTLEDVLAIVRVEKPKGVIVQYGGQTPLKLARALEAAGVPVIGTSPDAIDRAEDRERFQQAVQRLGLKQPDNATVTAIEQAIEKSREIGFPLVVRPSYVLGGRAMEIVYDEQDLRRYFNEAVSVSNESPVLLDRFLDDATEVDVDAICDGERVVIGGIMEHIEQAGVHSGDSACSLPAYTLSQEIQDKMREQVEKLAFELGVRGLMNIQFAVKDNEVYLIEVNPRAARTVPFVSKATGAPLAKIAARVMVGQTLEQQGFTKEIIPPYYSVKEVVLPFNKFPGVDPLLGPEMRSTGEVMGVGATFAEAYAKAELGCGSVYPEGGRALLSVREGDKQRVVDLASKLVKLGYQLDATHGTAVILGEAGINPRLVNKVHEGRPHILDRIKNHEYTYIVNTASGRQAIEDSKVLRRGALAHKVNYTTTLNAAFATCMSHTADAKASVTSVQELHARVKANQA.

Positions 1 to 403 (MPKRTDIQSI…SLQKALRGLE (403 aa)) are carboxyphosphate synthetic domain. ATP is bound by residues R129, R169, G175, G176, E208, L210, E215, G241, I242, H243, Q285, and E299. The region spanning 133-328 (DKAMKSIGLE…IAKVAAKLAV (196 aa)) is the ATP-grasp 1 domain. The Mg(2+) site is built by Q285, E299, and N301. Q285, E299, and N301 together coordinate Mn(2+). The tract at residues 404-553 (VGAAGLDEKV…YSTYDEECEA (150 aa)) is oligomerization domain. Positions 554–935 (NPTDKDKIMV…AYAKAELGCG (382 aa)) are carbamoyl phosphate synthetic domain. In terms of domain architecture, ATP-grasp 2 spans 678 to 869 (QQAVQRLGLK…LAKIAARVMV (192 aa)). R714, R753, L755, E760, G785, V786, H787, S788, Q828, and E840 together coordinate ATP. Mg(2+) contacts are provided by Q828, E840, and N842. The Mn(2+) site is built by Q828, E840, and N842. The MGS-like domain maps to 936-1076 (SVYPEGGRAL…LHARVKANQA (141 aa)). Residues 936-1076 (SVYPEGGRAL…LHARVKANQA (141 aa)) form an allosteric domain region.

It belongs to the CarB family. In terms of assembly, composed of two chains; the small (or glutamine) chain promotes the hydrolysis of glutamine to ammonia, which is used by the large (or ammonia) chain to synthesize carbamoyl phosphate. Tetramer of heterodimers (alpha,beta)4. It depends on Mg(2+) as a cofactor. Requires Mn(2+) as cofactor.

It catalyses the reaction hydrogencarbonate + L-glutamine + 2 ATP + H2O = carbamoyl phosphate + L-glutamate + 2 ADP + phosphate + 2 H(+). The catalysed reaction is hydrogencarbonate + NH4(+) + 2 ATP = carbamoyl phosphate + 2 ADP + phosphate + 2 H(+). Its pathway is amino-acid biosynthesis; L-arginine biosynthesis; carbamoyl phosphate from bicarbonate: step 1/1. It participates in pyrimidine metabolism; UMP biosynthesis via de novo pathway; (S)-dihydroorotate from bicarbonate: step 1/3. Functionally, large subunit of the glutamine-dependent carbamoyl phosphate synthetase (CPSase). CPSase catalyzes the formation of carbamoyl phosphate from the ammonia moiety of glutamine, carbonate, and phosphate donated by ATP, constituting the first step of 2 biosynthetic pathways, one leading to arginine and/or urea and the other to pyrimidine nucleotides. The large subunit (synthetase) binds the substrates ammonia (free or transferred from glutamine from the small subunit), hydrogencarbonate and ATP and carries out an ATP-coupled ligase reaction, activating hydrogencarbonate by forming carboxy phosphate which reacts with ammonia to form carbamoyl phosphate. This Vibrio cholerae serotype O1 (strain ATCC 39315 / El Tor Inaba N16961) protein is Carbamoyl phosphate synthase large chain.